Here is a 323-residue protein sequence, read N- to C-terminus: Olfactory receptor 6T1 (323 aa).

Residues 1-25 are Extracellular-facing; it reads MNPENWTQVTSFVLLGFPSSHLIQF. N-linked (GlcNAc...) asparagine glycosylation occurs at asparagine 5. The helical transmembrane segment at 26–46 threads the bilayer; it reads LVFLGLMVTYIVTATGKLLII. Residues 47 to 54 lie on the Cytoplasmic side of the membrane; that stretch reads VLSWIDQR. A helical transmembrane segment spans residues 55-75; that stretch reads LHIQMYFFLRNFSFLELLLVT. Residues 76-99 are Extracellular-facing; the sequence is VVVPKMLVVILTGDHTISFVSCII. Cysteine 97 and cysteine 189 are disulfide-bonded. A helical membrane pass occupies residues 100–120; it reads QSYLYFFLGTTDFFLLAVMSL. Residues 121 to 139 lie on the Cytoplasmic side of the membrane; that stretch reads DRYLAICRPLRYETLMNGH. Residues 140 to 160 form a helical membrane-spanning segment; that stretch reads VCSQLVLASWLAGFLWVLCPT. Over 161-197 the chain is Extracellular; it reads VLMASLPFCGPNGIDHFFRDSWPLLRLSCGDTHLLKL. Residues 198 to 217 form a helical membrane-spanning segment; it reads VAFMLSTLVLLGSLALTSVS. The Cytoplasmic portion of the chain corresponds to 218–237; it reads YACILATVLRAPTAAERRKA. Residues 238–258 traverse the membrane as a helical segment; the sequence is FSTCASHLTVVVIIYGSSIFL. The Extracellular portion of the chain corresponds to 259-271; the sequence is YIRMSEAQSKLLN. The helical transmembrane segment at 272-292 threads the bilayer; that stretch reads KGASVLSCIITPLLNPFIFTL. Residues 293–323 are Cytoplasmic-facing; that stretch reads RNDKVQQALREALGWPRLTAVMKLRVTSQRK.

This sequence belongs to the G-protein coupled receptor 1 family.

The protein localises to the cell membrane. In terms of biological role, odorant receptor. The sequence is that of Olfactory receptor 6T1 (OR6T1) from Homo sapiens (Human).